We begin with the raw amino-acid sequence, 376 residues long: Flap endonuclease 1 (376 aa).

The segment at 1–105 (MGIKGLSKLL…GELHKRKENA (105 aa)) is N-domain. Mg(2+) is bound at residue aspartate 34. Residues arginine 47 and arginine 71 each coordinate DNA. Residues aspartate 87, glutamate 159, glutamate 161, aspartate 180, and aspartate 182 each coordinate Mg(2+). The segment at 123–254 (QAKKLMKRTA…ITAFELIQQY (132 aa)) is I-domain. DNA is bound at residue glutamate 159. Positions 232 and 234 each coordinate DNA. Residue aspartate 234 coordinates Mg(2+). The segment at 336–344 (AQGRLDSFF) is interaction with PCNA. The tract at residues 354–376 (SEAASGVKRKKPTTKAKESRKKK) is disordered. The segment covering 360–376 (VKRKKPTTKAKESRKKK) has biased composition (basic residues).

This sequence belongs to the XPG/RAD2 endonuclease family. FEN1 subfamily. Interacts with PCNA. Three molecules of FEN1 bind to one PCNA trimer with each molecule binding to one PCNA monomer. PCNA stimulates the nuclease activity without altering cleavage specificity. Mg(2+) serves as cofactor. Phosphorylated. Phosphorylation upon DNA damage induces relocalization to the nuclear plasma.

The protein localises to the nucleus. Its subcellular location is the nucleolus. The protein resides in the nucleoplasm. It localises to the mitochondrion. Structure-specific nuclease with 5'-flap endonuclease and 5'-3' exonuclease activities involved in DNA replication and repair. During DNA replication, cleaves the 5'-overhanging flap structure that is generated by displacement synthesis when DNA polymerase encounters the 5'-end of a downstream Okazaki fragment. It enters the flap from the 5'-end and then tracks to cleave the flap base, leaving a nick for ligation. Also involved in the long patch base excision repair (LP-BER) pathway, by cleaving within the apurinic/apyrimidinic (AP) site-terminated flap. Acts as a genome stabilization factor that prevents flaps from equilibrating into structures that lead to duplications and deletions. Also possesses 5'-3' exonuclease activity on nicked or gapped double-stranded DNA, and exhibits RNase H activity. Also involved in replication and repair of rDNA and in repairing mitochondrial DNA. In Entamoeba histolytica (strain ATCC 30459 / HM-1:IMSS / ABRM), this protein is Flap endonuclease 1.